We begin with the raw amino-acid sequence, 240 residues long: MSGESSRSLGKGSAPPGPVPEGQIRVYSMRFCPFAQRTLMVLKAKGIRHEVININLKNKPEWFFEKNPLGLVPVLENSQGHLVTESVITCEYLDEAYPEKKLFPDDPYKKARQKMTLESFSKVPPLIASFVRSKRKEDSPNLREALENEFKKLEEGMDNYKSFLGGDSPSMVDYLTWPWFQRLEALELKECLAHTPKLKLWMAAMQQDPVASSHKIDAKTYREYLNLYLQDSPEACDYGL.

An N-acetylserine modification is found at serine 2. Residues 22-101 enclose the GST N-terminal domain; sequence GQIRVYSMRF…YLDEAYPEKK (80 aa). Residue cysteine 32 is the Nucleophile of the active site. Position 57 is an N6-acetyllysine (lysine 57). Glutathione-binding positions include lysine 59, valine 72, and 85-86; that span reads ES. The region spanning 106-227 is the GST C-terminal domain; that stretch reads DPYKKARQKM…AKTYREYLNL (122 aa). Phosphoserine is present on serine 129. Position 152 is an N6-acetyllysine (lysine 152).

Belongs to the GST superfamily. Omega family. As to quaternary structure, homodimer.

It is found in the cytoplasm. It localises to the cytosol. The enzyme catalyses RX + glutathione = an S-substituted glutathione + a halide anion + H(+). It catalyses the reaction L-dehydroascorbate + 2 glutathione = glutathione disulfide + L-ascorbate. The catalysed reaction is methylarsonate + 2 glutathione + H(+) = methylarsonous acid + glutathione disulfide + H2O. Functionally, exhibits glutathione-dependent thiol transferase and dehydroascorbate reductase activities. Has S-(phenacyl)glutathione reductase activity. Also has glutathione S-transferase activity. Participates in the biotransformation of inorganic arsenic and reduces monomethylarsonic acid (MMA) and dimethylarsonic acid. The protein is Glutathione S-transferase omega-1 (Gsto1) of Mus musculus (Mouse).